The primary structure comprises 339 residues: MTHGEPQEFSFDVEENHGHVPVLRARMAELIAPKVTAMGSDAVIIDGTLGAGGHSKYFLESFPEARVIGLDRDTNSLASARERLKEFGDRFLGIHTRFDRFAPKLEELAQSGNPIAATALEQGISGALFDLGVSSMQLDQAERGFAYRVDAPLDMRMDNTIGITAADVLNTYSHGELARILKTYGDERFAGKIASAIVREREKEPFDTSARLVELLYATIPAATRRTGGHPAKRTFQALRIEVNRELESLENVLPEITQRLTTGGRAVFMSYQSLEDKIVKRYFVDISTSKTPPGLPMELPEYAPKFKVVTRGAEKATDAEIEENPRAASVRVRAIEAL.

Residues 52–54 (GGH), aspartate 71, phenylalanine 98, aspartate 130, and glutamine 137 each bind S-adenosyl-L-methionine.

Belongs to the methyltransferase superfamily. RsmH family.

It localises to the cytoplasm. The catalysed reaction is cytidine(1402) in 16S rRNA + S-adenosyl-L-methionine = N(4)-methylcytidine(1402) in 16S rRNA + S-adenosyl-L-homocysteine + H(+). In terms of biological role, specifically methylates the N4 position of cytidine in position 1402 (C1402) of 16S rRNA. This Corynebacterium diphtheriae (strain ATCC 700971 / NCTC 13129 / Biotype gravis) protein is Ribosomal RNA small subunit methyltransferase H.